The following is a 285-amino-acid chain: UPF0014 membrane protein STAR2 (285 aa).

7 consecutive transmembrane segments (helical) span residues 30–50 (FLVG…AVAL), 64–84 (YAMA…QFIF), 88–108 (SAAW…YTAG), 119–139 (HIAA…LVAL), 148–168 (YIIP…GVTM), 203–225 (SLVI…ALPG), and 240–262 (AIQL…SILS).

The protein belongs to the UPF0014 family. In terms of assembly, interacts with STAR2. As to expression, expressed in roots.

The protein resides in the membrane. Its function is as follows. Associates with STAR2 to form a functional transmembrane ABC transporter required for detoxification of aluminum (Al) in roots. Can specifically transport UDP-glucose. This is UPF0014 membrane protein STAR2 from Oryza sativa subsp. japonica (Rice).